The following is a 126-amino-acid chain: Large-conductance mechanosensitive channel (126 aa).

2 consecutive transmembrane segments (helical) span residues 14 to 34 and 67 to 87; these read VIDL…VKSL and GSFL…FILV.

This sequence belongs to the MscL family. In terms of assembly, homopentamer.

It localises to the cell membrane. In terms of biological role, channel that opens in response to stretch forces in the membrane lipid bilayer. May participate in the regulation of osmotic pressure changes within the cell. The polypeptide is Large-conductance mechanosensitive channel (Lactiplantibacillus plantarum (strain ATCC BAA-793 / NCIMB 8826 / WCFS1) (Lactobacillus plantarum)).